A 323-amino-acid chain; its full sequence is Prostaglandin F synthase 2 (323 aa).

Residues 20 to 24 (GFGTY) and Asp-50 each bind NADP(+). Residue Tyr-55 is the Proton donor of the active site. His-117 is a substrate binding site. NADP(+) is bound by residues 166–167 (SN), Gln-190, 216–221 (YAALGA), and 270–280 (KSFNKKRIKEN).

Belongs to the aldo/keto reductase family. In terms of assembly, monomer.

The protein localises to the cytoplasm. The enzyme catalyses prostaglandin F2alpha + NADP(+) = prostaglandin D2 + NADPH + H(+). It participates in lipid metabolism; prostaglandin biosynthesis. Its function is as follows. Catalyzes the reduction of PGD(2) and PGH(2) to PGF(2 alpha) and a stereoisomer, respectively. It has a broad substrate specificity and also reduces other carbonyl compounds. This chain is Prostaglandin F synthase 2, found in Bos taurus (Bovine).